A 144-amino-acid chain; its full sequence is Large ribosomal subunit protein uL15 (144 aa).

The disordered stretch occupies residues 1-58 (MRLNTLSPAAGSKPSKKRVGRGIGSGLGKTGGRGHKGQKSRSGGSVRPGFEGGQMPLK). Positions 21 to 31 (RGIGSGLGKTG) are enriched in gly residues.

It belongs to the universal ribosomal protein uL15 family. Part of the 50S ribosomal subunit.

Its function is as follows. Binds to the 23S rRNA. In Vibrio atlanticus (strain LGP32) (Vibrio splendidus (strain Mel32)), this protein is Large ribosomal subunit protein uL15.